A 20-amino-acid polypeptide reads, in one-letter code: Thylakoid lumenal 22 kDa protein (20 aa).

The protein localises to the plastid. It is found in the chloroplast thylakoid lumen. The chain is Thylakoid lumenal 22 kDa protein from Spinacia oleracea (Spinach).